We begin with the raw amino-acid sequence, 363 residues long: Thioredoxin domain-containing protein C13F5.05, mitochondrial (363 aa).

A mitochondrion-targeting transit peptide spans 1–24 (MLFRIPTLFTLFLACFSLVSGVFG). Residues 32–141 (NTIELNSKNF…KSLQKFVSDS (110 aa)) enclose the Thioredoxin domain.

The protein localises to the mitochondrion. This chain is Thioredoxin domain-containing protein C13F5.05, mitochondrial, found in Schizosaccharomyces pombe (strain 972 / ATCC 24843) (Fission yeast).